Reading from the N-terminus, the 166-residue chain is Large ribosomal subunit protein uL11 (166 aa).

At Arg-67 the chain carries N5-methylarginine.

This sequence belongs to the universal ribosomal protein uL11 family.

The protein is Large ribosomal subunit protein uL11 (RPL12) of Encephalitozoon cuniculi (strain GB-M1) (Microsporidian parasite).